We begin with the raw amino-acid sequence, 248 residues long: Coenzyme F420:L-glutamate ligase (248 aa).

Residues 15–18 (IPLI), 45–46 (ET), and lysine 50 each bind GTP. Position 115 (aspartate 115) interacts with a divalent metal cation. GTP is bound at residue asparagine 118. A divalent metal cation contacts are provided by aspartate 155, serine 156, and glutamine 213. 211 to 218 (MGQSNEGI) serves as a coordination point for GTP.

Belongs to the CofE family. Homodimer. The cofactor is Mg(2+). Requires Mn(2+) as cofactor. K(+) is required as a cofactor.

The enzyme catalyses oxidized coenzyme F420-0 + GTP + L-glutamate = oxidized coenzyme F420-1 + GDP + phosphate + H(+). It catalyses the reaction oxidized coenzyme F420-1 + GTP + L-glutamate = oxidized coenzyme F420-2 + GDP + phosphate + H(+). The protein operates within cofactor biosynthesis; coenzyme F420 biosynthesis. In terms of biological role, catalyzes the GTP-dependent successive addition of two or more gamma-linked L-glutamates to the L-lactyl phosphodiester of 7,8-didemethyl-8-hydroxy-5-deazariboflavin (F420-0) to form coenzyme F420-0-glutamyl-glutamate (F420-2) or polyglutamated F420 derivatives. The polypeptide is Coenzyme F420:L-glutamate ligase (Methanococcus maripaludis (strain C7 / ATCC BAA-1331)).